The primary structure comprises 57 residues: Large ribosomal subunit protein bL32c (57 aa).

Belongs to the bacterial ribosomal protein bL32 family.

It is found in the plastid. It localises to the chloroplast. This is Large ribosomal subunit protein bL32c from Phalaenopsis aphrodite subsp. formosana (Moth orchid).